Consider the following 94-residue polypeptide: UPF0213 protein BH0048 (94 aa).

In terms of domain architecture, GIY-YIG spans 1 to 76 (MNHYVYILEC…KHLSRRKKEQ (76 aa)).

This sequence belongs to the UPF0213 family.

The sequence is that of UPF0213 protein BH0048 from Halalkalibacterium halodurans (strain ATCC BAA-125 / DSM 18197 / FERM 7344 / JCM 9153 / C-125) (Bacillus halodurans).